Here is a 74-residue protein sequence, read N- to C-terminus: Small ribosomal subunit protein bS18 (74 aa).

Belongs to the bacterial ribosomal protein bS18 family. Part of the 30S ribosomal subunit. Forms a tight heterodimer with protein bS6.

Functionally, binds as a heterodimer with protein bS6 to the central domain of the 16S rRNA, where it helps stabilize the platform of the 30S subunit. This Gloeobacter violaceus (strain ATCC 29082 / PCC 7421) protein is Small ribosomal subunit protein bS18.